Reading from the N-terminus, the 222-residue chain is Deoxyribose-phosphate aldolase (222 aa).

The active-site Proton donor/acceptor is the Asp89. Lys151 serves as the catalytic Schiff-base intermediate with acetaldehyde. Residue Lys180 is the Proton donor/acceptor of the active site.

It belongs to the DeoC/FbaB aldolase family. DeoC type 1 subfamily.

It localises to the cytoplasm. It catalyses the reaction 2-deoxy-D-ribose 5-phosphate = D-glyceraldehyde 3-phosphate + acetaldehyde. It participates in carbohydrate degradation; 2-deoxy-D-ribose 1-phosphate degradation; D-glyceraldehyde 3-phosphate and acetaldehyde from 2-deoxy-alpha-D-ribose 1-phosphate: step 2/2. Catalyzes a reversible aldol reaction between acetaldehyde and D-glyceraldehyde 3-phosphate to generate 2-deoxy-D-ribose 5-phosphate. This chain is Deoxyribose-phosphate aldolase, found in Acholeplasma laidlawii (strain PG-8A).